We begin with the raw amino-acid sequence, 250 residues long: Methylthioribulose-1-phosphate dehydratase (250 aa).

H103 and H105 together coordinate Zn(2+).

It belongs to the aldolase class II family. MtnB subfamily. The cofactor is Zn(2+).

It catalyses the reaction 5-(methylsulfanyl)-D-ribulose 1-phosphate = 5-methylsulfanyl-2,3-dioxopentyl phosphate + H2O. The protein operates within amino-acid biosynthesis; L-methionine biosynthesis via salvage pathway; L-methionine from S-methyl-5-thio-alpha-D-ribose 1-phosphate: step 2/6. Functionally, catalyzes the dehydration of methylthioribulose-1-phosphate (MTRu-1-P) into 2,3-diketo-5-methylthiopentyl-1-phosphate (DK-MTP-1-P). The polypeptide is Methylthioribulose-1-phosphate dehydratase (Leptospira borgpetersenii serovar Hardjo-bovis (strain JB197)).